Here is a 395-residue protein sequence, read N- to C-terminus: Elongation factor Tu (395 aa).

Positions 10 to 204 (KPHVNIGTIG…NVDEYIPLPQ (195 aa)) constitute a tr-type G domain. Residues 19–26 (GHVDHGKT) are G1. 19–26 (GHVDHGKT) serves as a coordination point for GTP. Position 26 (T26) interacts with Mg(2+). The interval 60 to 64 (GITIN) is G2. A G3 region spans residues 81 to 84 (DCPG). Residues 81 to 85 (DCPGH) and 136 to 139 (NKVD) each bind GTP. The tract at residues 136–139 (NKVD) is G4. The G5 stretch occupies residues 174-176 (SAL).

Belongs to the TRAFAC class translation factor GTPase superfamily. Classic translation factor GTPase family. EF-Tu/EF-1A subfamily. As to quaternary structure, monomer.

The protein localises to the cytoplasm. The enzyme catalyses GTP + H2O = GDP + phosphate + H(+). Its function is as follows. GTP hydrolase that promotes the GTP-dependent binding of aminoacyl-tRNA to the A-site of ribosomes during protein biosynthesis. The chain is Elongation factor Tu from Amoebophilus asiaticus (strain 5a2).